The sequence spans 239 residues: MRKYRRILLKISGESLAGESGYGIDAGVLESFADDIKEATDLGAEIALVIGGGNIFRGLSAAAASMDRVQADYMGMLATVINSLALQDALERKGIFTRLVTAIKMEQIAEPFIRRRAVRHLEKGRVVIFGAGTGNPYFTTDTAASLRAIEIEADVIVKGTRVEGVYDSDPEKNPNAEFFPKISYVDVIRKNLRVMDMTAITLCRENTLPIVVMNMNIKGNFTRLLKGEPIGTLVHVGEE.

10–13 contacts ATP; sequence KISG. Residues 18 to 23 form an involved in allosteric activation by GTP region; that stretch reads GESGYG. G52 is a binding site for UMP. 2 residues coordinate ATP: G53 and R57. UMP contacts are provided by residues D72 and 133 to 140; that span reads TGNPYFTT. ATP contacts are provided by T160, Y166, and D169.

This sequence belongs to the UMP kinase family. Homohexamer.

It is found in the cytoplasm. It carries out the reaction UMP + ATP = UDP + ADP. It participates in pyrimidine metabolism; CTP biosynthesis via de novo pathway; UDP from UMP (UMPK route): step 1/1. With respect to regulation, allosterically activated by GTP. Inhibited by UTP. Its function is as follows. Catalyzes the reversible phosphorylation of UMP to UDP. The polypeptide is Uridylate kinase (Chlorobaculum tepidum (strain ATCC 49652 / DSM 12025 / NBRC 103806 / TLS) (Chlorobium tepidum)).